Consider the following 201-residue polypeptide: Peptidyl-tRNA hydrolase (201 aa).

Tyr-14 provides a ligand contact to tRNA. The active-site Proton acceptor is His-19. 3 residues coordinate tRNA: Tyr-64, Asn-66, and Asn-112.

This sequence belongs to the PTH family. In terms of assembly, monomer.

It localises to the cytoplasm. The enzyme catalyses an N-acyl-L-alpha-aminoacyl-tRNA + H2O = an N-acyl-L-amino acid + a tRNA + H(+). Functionally, hydrolyzes ribosome-free peptidyl-tRNAs (with 1 or more amino acids incorporated), which drop off the ribosome during protein synthesis, or as a result of ribosome stalling. Catalyzes the release of premature peptidyl moieties from peptidyl-tRNA molecules trapped in stalled 50S ribosomal subunits, and thus maintains levels of free tRNAs and 50S ribosomes. This Rhodopseudomonas palustris (strain BisB18) protein is Peptidyl-tRNA hydrolase.